A 305-amino-acid polypeptide reads, in one-letter code: Popeye domain-containing protein 3 (305 aa).

The N-linked (GlcNAc...) asparagine glycan is linked to N4. The next 3 membrane-spanning stretches (helical) occupy residues 34–54 (SILF…LYVF), 55–75 (SLLG…VCAA), and 77–99 (IFSW…TYQV). Positions 273–305 (PETPPVPPPRRLQRRSSGRPRPGVPNCSSPRKQ) are disordered. Residue N298 is glycosylated (N-linked (GlcNAc...) asparagine).

The protein belongs to the popeye family. As to expression, expressed first preferentially in atrium and later also in the subepicardial compact layer of the ventricles.

Its subcellular location is the membrane. Functionally, may play a role in the maintenance of heart function mediated, at least in part, through cAMP-binding. May play a role in the regulation of KCNK2-mediated current amplitude. The polypeptide is Popeye domain-containing protein 3 (POPDC3) (Gallus gallus (Chicken)).